We begin with the raw amino-acid sequence, 243 residues long: Tyrosine recombinase XerD-like (243 aa).

Residues 1-72 (MKEYIRPFLN…AVNQFLYFLY (72 aa)) enclose the Core-binding (CB) domain. Positions 85 to 243 (LPKVSVSKEQ…KTMITLEKYR (159 aa)) constitute a Tyr recombinase domain. Catalysis depends on residues lysine 149 and arginine 210. The O-(3'-phospho-DNA)-tyrosine intermediate role is filled by tyrosine 242.

It belongs to the 'phage' integrase family. XerD-like subfamily.

The protein localises to the cytoplasm. Functionally, putative tyrosine recombinase. Not involved in the cutting and rejoining of the recombining DNA molecules on dif(SL) site. This is Tyrosine recombinase XerD-like from Streptococcus sanguinis (strain SK36).